Here is a 26-residue protein sequence, read N- to C-terminus: Oxyopinin-3a (26 aa).

As to expression, expressed by the venom gland.

It is found in the secreted. In terms of biological role, may have cytolytic and antimicrobial activity. This chain is Oxyopinin-3a, found in Oxyopes takobius (Lynx spider).